A 153-amino-acid polypeptide reads, in one-letter code: FAD synthase (153 aa).

ATP is bound by residues 9 to 10 (TF), 14 to 17 (HPGH), N92, and Y119.

Belongs to the archaeal FAD synthase family. In terms of assembly, homodimer. A divalent metal cation serves as cofactor.

The catalysed reaction is FMN + ATP + H(+) = FAD + diphosphate. It functions in the pathway cofactor biosynthesis; FAD biosynthesis; FAD from FMN: step 1/1. Catalyzes the transfer of the AMP portion of ATP to flavin mononucleotide (FMN) to produce flavin adenine dinucleotide (FAD) coenzyme. This is FAD synthase from Methanosphaerula palustris (strain ATCC BAA-1556 / DSM 19958 / E1-9c).